Consider the following 2157-residue polypeptide: Mediator of RNA polymerase II transcription subunit 12-like protein (2157 aa).

A disordered region spans residues 1–31 (MAAFGLLSYEQRPLKRPRLGPPDVYPQDPKQ). Thr-462 carries the post-translational modification Phosphothreonine. The span at 1437-1456 (ELEKGQHLGSSSKKERDRQK) shows a compositional bias: basic and acidic residues. Disordered stretches follow at residues 1437–1461 (ELEK…KSMS), 1724–1807 (RSYY…SQMT), and 2040–2157 (IDAV…PSHF). Residues 1771–1780 (TKGRKRKTKS) show a composition bias toward basic residues. Low complexity-rich tracts occupy residues 2063–2076 (PRQQ…RLLQ), 2083–2101 (QQPQ…QSQA), and 2116–2136 (RQGL…RQLQ). Polar residues predominate over residues 2137 to 2148 (KQLSSNQPQQGV).

It belongs to the Mediator complex subunit 12 family. May be a component of the Mediator complex, which is known to be composed of MED1, MED4, MED6, MED7, MED8, MED9, MED10, MED11, MED12, MED13, MED13L, MED14, MED15, MED16, MED17, MED18, MED19, MED20, MED21, MED22, MED23, MED24, MED25, MED26, MED27, MED29, MED30, MED31, CCNC, CDK8 and CDC2L6/CDK11. The MED12, MED13, CCNC and CDK8 subunits form a distinct module termed the CDK8 module. Mediator containing the CDK8 module is less active than Mediator lacking this module in supporting transcriptional activation. Individual preparations of the Mediator complex lacking one or more distinct subunits have been variously termed ARC, CRSP, DRIP, PC2, SMCC and TRAP.

It is found in the nucleus. Its function is as follows. May be a component of the Mediator complex, a coactivator involved in the regulated transcription of nearly all RNA polymerase II-dependent genes. Mediator functions as a bridge to convey information from gene-specific regulatory proteins to the basal RNA polymerase II transcription machinery. Mediator is recruited to promoters by direct interactions with regulatory proteins and serves as a scaffold for the assembly of a functional preinitiation complex with RNA polymerase II and the general transcription factors. In Mus musculus (Mouse), this protein is Mediator of RNA polymerase II transcription subunit 12-like protein (Med12l).